The following is a 329-amino-acid chain: Fructose-1,6-bisphosphatase class 1 (329 aa).

Residues Glu-84, Asp-103, Leu-105, and Asp-106 each coordinate Mg(2+). Substrate is bound by residues 106-109 (DGSS), Asn-196, and Lys-262. Residue Glu-268 participates in Mg(2+) binding.

This sequence belongs to the FBPase class 1 family. As to quaternary structure, homotetramer. Mg(2+) serves as cofactor.

The protein resides in the cytoplasm. The catalysed reaction is beta-D-fructose 1,6-bisphosphate + H2O = beta-D-fructose 6-phosphate + phosphate. It functions in the pathway carbohydrate biosynthesis; gluconeogenesis. The chain is Fructose-1,6-bisphosphatase class 1 from Shewanella woodyi (strain ATCC 51908 / MS32).